The chain runs to 302 residues: Deubiquitinase OTUD6B (302 aa).

The segment covering 1–10 (MEGSEDEEAE) has biased composition (acidic residues). 2 disordered regions span residues 1–52 (MEGS…KQLA) and 99–121 (EQQI…AALE). The segment covering 106–116 (RISKAQKRREK) has biased composition (basic residues). Positions 156 to 293 (LEIKQIPSDG…GEHYNSVKLL (138 aa)) constitute an OTU domain. Positions 161 to 167 (IPSDGHC) are cys-loop. Asp164 is an active-site residue. Cys167 serves as the catalytic Nucleophile. A variable-loop region spans residues 228 to 238 (IANTAAWGGQL). Residues 276–286 (YMRHAYGLGEH) form a his-loop region. His286 is an active-site residue.

It carries out the reaction Thiol-dependent hydrolysis of ester, thioester, amide, peptide and isopeptide bonds formed by the C-terminal Gly of ubiquitin (a 76-residue protein attached to proteins as an intracellular targeting signal).. In terms of biological role, deubiquitinating enzyme that may play a role in the ubiquitin-dependent regulation of different cellular processes. The chain is Deubiquitinase OTUD6B (OTUD6B) from Gallus gallus (Chicken).